We begin with the raw amino-acid sequence, 316 residues long: Lipoyl synthase (316 aa).

Positions 1–19 are enriched in basic and acidic residues; it reads MRDLKIPEQRHPEKAHRPD. The disordered stretch occupies residues 1-31; the sequence is MRDLKIPEQRHPEKAHRPDNAQPKKPSWIRV. Positions 55, 60, 66, 81, 85, 88, and 295 each coordinate [4Fe-4S] cluster. The Radical SAM core domain maps to 67–284; the sequence is WSQGHATMMI…EKAAYGKGFL (218 aa).

The protein belongs to the radical SAM superfamily. Lipoyl synthase family. The cofactor is [4Fe-4S] cluster.

It localises to the cytoplasm. It catalyses the reaction [[Fe-S] cluster scaffold protein carrying a second [4Fe-4S](2+) cluster] + N(6)-octanoyl-L-lysyl-[protein] + 2 oxidized [2Fe-2S]-[ferredoxin] + 2 S-adenosyl-L-methionine + 4 H(+) = [[Fe-S] cluster scaffold protein] + N(6)-[(R)-dihydrolipoyl]-L-lysyl-[protein] + 4 Fe(3+) + 2 hydrogen sulfide + 2 5'-deoxyadenosine + 2 L-methionine + 2 reduced [2Fe-2S]-[ferredoxin]. It functions in the pathway protein modification; protein lipoylation via endogenous pathway; protein N(6)-(lipoyl)lysine from octanoyl-[acyl-carrier-protein]: step 2/2. Functionally, catalyzes the radical-mediated insertion of two sulfur atoms into the C-6 and C-8 positions of the octanoyl moiety bound to the lipoyl domains of lipoate-dependent enzymes, thereby converting the octanoylated domains into lipoylated derivatives. The protein is Lipoyl synthase of Ruegeria sp. (strain TM1040) (Silicibacter sp.).